A 238-amino-acid polypeptide reads, in one-letter code: uncharacterized protein (238 aa).

3 helical membrane passes run 75–95 (YAIF…HNFY), 116–136 (IVLI…FSLI), and 172–192 (IQGL…LEVI). The segment at 200–238 (DVEMSSMRGQAITTEPASDNTMAEETDCNTSKDVESGSN) is disordered. Residues 206 to 220 (MRGQAITTEPASDNT) are compositionally biased toward polar residues. Basic and acidic residues predominate over residues 229-238 (TSKDVESGSN).

It localises to the membrane. This is an uncharacterized protein from Schizosaccharomyces pombe (strain 972 / ATCC 24843) (Fission yeast).